The chain runs to 301 residues: Ubiquitin thioesterase OTU1 (301 aa).

The interval 5–83 (RCKAKNGTHL…IVEEEKNKPK (79 aa)) is UBX-like. Residues 102–227 (VERRVVPADN…GIHYDPLQKV (126 aa)) enclose the OTU domain. The segment at 107-113 (VPADNSC) is cys-loop. Residue Asp-110 is part of the active site. Cys-113 serves as the catalytic Nucleophile. Residues 166–176 (IRRDDTWGGAI) form a variable-loop region. Residues 216–220 (YDGIH) are his-loop. Ile-219 lines the substrate pocket. The active site involves His-220. Residues 244-249 (DVILAQ) form an S2 site region. The C2H2-type zinc-finger motif lies at 271-295 (LRCMVCQTGLVGQKEAREHAKETGH). The active site involves His-295.

Its subcellular location is the cytoplasm. It catalyses the reaction Thiol-dependent hydrolysis of ester, thioester, amide, peptide and isopeptide bonds formed by the C-terminal Gly of ubiquitin (a 76-residue protein attached to proteins as an intracellular targeting signal).. Hydrolase that can remove conjugated ubiquitin from proteins and participates in endoplasmic reticulum-associated degradation (ERAD) for misfolded lumenal proteins. May act by triming the ubiquitin chain on the associated substrate to facilitate their threading through the VCP/p97 pore. Ubiquitin moieties on substrates may present a steric impediment to the threading process when the substrate is transferred to the VCP pore and threaded through VCP's axial channel. Mediates deubiquitination of 'Lys-27'-, 'Lys-29'- and 'Lys-33'-linked polyubiquitin chains. Also able to hydrolyze 'Lys-11'-linked ubiquitin chains. Cleaves both polyubiquitin and di-ubiquitin. This Danio rerio (Zebrafish) protein is Ubiquitin thioesterase OTU1 (yod1).